A 228-amino-acid chain; its full sequence is MADS-box transcription factor 22 (228 aa).

Residues 1–61 (MARERREIKR…GKLSHFASSS (61 aa)) form the MADS-box domain. The K-box domain maps to 86–176 (LNLEHSKYAH…RNQVSQISPA (91 aa)). The interval 189–217 (EGQSSESVMTALHSGSSQSQDNDDGSDVS) is disordered.

As to expression, expressed in palea and stamen primordia. Expressed in shoots and coleoptiles.

It localises to the nucleus. In terms of biological role, probable transcription factor. May be required for spikelet (rice flower) development. Transcription factor that functions to support the MADS55 in its function as negative regulator of brassinosteroid signaling. This chain is MADS-box transcription factor 22 (MADS22), found in Oryza sativa subsp. japonica (Rice).